The following is a 426-amino-acid chain: MLDSKLLRGQLQEVADRLASRGFSLDVARIESLEERRKAVQTRTEQLQAERNARSKSIGQAKAKGEDIAPLMADVERMANELAAGKLELDGIQAELDGILLTIPNLPDASVPVGASEDDNVEVRRWGTPKAFDFEIKDHVALGEVSGGLDFEAAAKLSGARFAVLRGPIARLHRALAQFMINLHTGEHGYEEHYTPYLVQAPALQGTGQLPKFEEDLFKITREGEADFYLIPTAEVSLTNLVAGEILDAKQLPLKLVAHTPCFRSEAGASGRDTRGMIRQHQFDKVEMVQVVEPAKSMEALEGLTANAERVLQLLELPYRVLALCTGDMGFGAVKTYDLEVWVPSQDKYREISSCSNCGDFQARRMQARWRNPETGKPELVHTLNGSGLAVGRTLVAVLENYQQADGSILVPEVLKPYMGGVEVIR.

Threonine 233–glutamate 235 provides a ligand contact to L-serine. Arginine 264–glutamate 266 is a binding site for ATP. Glutamate 287 contributes to the L-serine binding site. An ATP-binding site is contributed by glutamate 351–serine 354. Serine 387 provides a ligand contact to L-serine.

Belongs to the class-II aminoacyl-tRNA synthetase family. Type-1 seryl-tRNA synthetase subfamily. Homodimer. The tRNA molecule binds across the dimer.

It is found in the cytoplasm. It catalyses the reaction tRNA(Ser) + L-serine + ATP = L-seryl-tRNA(Ser) + AMP + diphosphate + H(+). It carries out the reaction tRNA(Sec) + L-serine + ATP = L-seryl-tRNA(Sec) + AMP + diphosphate + H(+). Its pathway is aminoacyl-tRNA biosynthesis; selenocysteinyl-tRNA(Sec) biosynthesis; L-seryl-tRNA(Sec) from L-serine and tRNA(Sec): step 1/1. Catalyzes the attachment of serine to tRNA(Ser). Is also able to aminoacylate tRNA(Sec) with serine, to form the misacylated tRNA L-seryl-tRNA(Sec), which will be further converted into selenocysteinyl-tRNA(Sec). The protein is Serine--tRNA ligase of Pseudomonas putida (strain GB-1).